We begin with the raw amino-acid sequence, 55 residues long: PI-stichotoxin-She2a (55 aa).

One can recognise a BPTI/Kunitz inhibitor domain in the interval cysteine 3–cysteine 53. 3 disulfides stabilise this stretch: cysteine 3-cysteine 53, cysteine 12-cysteine 36, and cysteine 28-cysteine 49.

Its subcellular location is the secreted. The protein localises to the nematocyst. Active against serine, cysteine, and aspartic proteases. Can bind vertebrate trypsin and chymotrypsin. The polypeptide is PI-stichotoxin-She2a (Stichodactyla helianthus (Sun anemone)).